We begin with the raw amino-acid sequence, 151 residues long: Ribonuclease H (151 aa).

The region spanning 1–143 (MEEYVIYTDG…VDRVARKEAA (143 aa)) is the RNase H type-1 domain. Residues D9, E48, D71, and D135 each contribute to the Mg(2+) site.

Belongs to the RNase H family. Monomer. Requires Mg(2+) as cofactor.

Its subcellular location is the cytoplasm. The catalysed reaction is Endonucleolytic cleavage to 5'-phosphomonoester.. Its function is as follows. Endonuclease that specifically degrades the RNA of RNA-DNA hybrids. The protein is Ribonuclease H of Neorickettsia sennetsu (strain ATCC VR-367 / Miyayama) (Ehrlichia sennetsu).